The following is a 284-amino-acid chain: RNase adapter protein RapZ (284 aa).

ATP is bound at residue 8-15 (GRSGSGKS). Position 56–59 (56–59 (DVRN)) interacts with GTP. The segment at 266-284 (RSRGKNVQSRHRTLEKRKP) is RNA-binding.

Belongs to the RapZ-like family. RapZ subfamily. Homotrimer.

Modulates the synthesis of GlmS, by affecting the processing and stability of the regulatory small RNA GlmZ. When glucosamine-6-phosphate (GlcN6P) concentrations are high in the cell, RapZ binds GlmZ and targets it to cleavage by RNase E. Consequently, GlmZ is inactivated and unable to activate GlmS synthesis. Under low GlcN6P concentrations, RapZ is sequestered and inactivated by an other regulatory small RNA, GlmY, preventing GlmZ degradation and leading to synthesis of GlmS. This Shigella dysenteriae serotype 1 (strain Sd197) protein is RNase adapter protein RapZ.